The sequence spans 301 residues: Protoheme IX farnesyltransferase 1 (301 aa).

Helical transmembrane passes span V29 to V49, V51 to L71, A101 to N121, L123 to L143, N150 to T170, A177 to I197, C223 to M243, C244 to W264, and F281 to S301.

Belongs to the UbiA prenyltransferase family. Protoheme IX farnesyltransferase subfamily.

The protein localises to the cell inner membrane. The catalysed reaction is heme b + (2E,6E)-farnesyl diphosphate + H2O = Fe(II)-heme o + diphosphate. The protein operates within porphyrin-containing compound metabolism; heme O biosynthesis; heme O from protoheme: step 1/1. Converts heme B (protoheme IX) to heme O by substitution of the vinyl group on carbon 2 of heme B porphyrin ring with a hydroxyethyl farnesyl side group. The protein is Protoheme IX farnesyltransferase 1 of Shewanella putrefaciens (strain CN-32 / ATCC BAA-453).